A 144-amino-acid polypeptide reads, in one-letter code: Large ribosomal subunit protein uL11m (144 aa).

The N-terminal 32 residues, 1–32, are a transit peptide targeting the mitochondrion; it reads MASTRTTIIKLIVPAGKATPTPPIGPALGARG.

Belongs to the universal ribosomal protein uL11 family. As to quaternary structure, component of the mitochondrial large ribosomal subunit (mt-LSU). Mature yeast 74S mitochondrial ribosomes consist of a small (37S) and a large (54S) subunit. The 37S small subunit contains a 15S ribosomal RNA (15S mt-rRNA) and at least 32 different proteins. The 54S large subunit contains a 21S rRNA (21S mt-rRNA) and at least 45 different proteins.

The protein localises to the mitochondrion. It localises to the cytoplasm. Component of the mitochondrial ribosome (mitoribosome), a dedicated translation machinery responsible for the synthesis of mitochondrial genome-encoded proteins, including at least some of the essential transmembrane subunits of the mitochondrial respiratory chain. The mitoribosomes are attached to the mitochondrial inner membrane and translation products are cotranslationally integrated into the membrane. This is Large ribosomal subunit protein uL11m from Schizosaccharomyces pombe (strain 972 / ATCC 24843) (Fission yeast).